We begin with the raw amino-acid sequence, 123 residues long: Small ribosomal subunit protein uS13 (123 aa).

The interval 99–123 (RGQRTRTNARTRKGPRRTVGVKRKK) is disordered.

The protein belongs to the universal ribosomal protein uS13 family. As to quaternary structure, part of the 30S ribosomal subunit. Forms a loose heterodimer with protein S19. Forms two bridges to the 50S subunit in the 70S ribosome.

Located at the top of the head of the 30S subunit, it contacts several helices of the 16S rRNA. In the 70S ribosome it contacts the 23S rRNA (bridge B1a) and protein L5 of the 50S subunit (bridge B1b), connecting the 2 subunits; these bridges are implicated in subunit movement. Contacts the tRNAs in the A and P-sites. The protein is Small ribosomal subunit protein uS13 of Carboxydothermus hydrogenoformans (strain ATCC BAA-161 / DSM 6008 / Z-2901).